An 84-amino-acid chain; its full sequence is ATP synthase subunit c (84 aa).

The next 2 helical transmembrane spans lie at 9-29 (IIGA…GFAI) and 54-74 (IVAG…LLFI).

The protein belongs to the ATPase C chain family. In terms of assembly, F-type ATPases have 2 components, F(1) - the catalytic core - and F(0) - the membrane proton channel. F(1) has five subunits: alpha(3), beta(3), gamma(1), delta(1), epsilon(1). F(0) has three main subunits: a(1), b(2) and c(10-14). The alpha and beta chains form an alternating ring which encloses part of the gamma chain. F(1) is attached to F(0) by a central stalk formed by the gamma and epsilon chains, while a peripheral stalk is formed by the delta and b chains.

Its subcellular location is the cell inner membrane. Functionally, f(1)F(0) ATP synthase produces ATP from ADP in the presence of a proton or sodium gradient. F-type ATPases consist of two structural domains, F(1) containing the extramembraneous catalytic core and F(0) containing the membrane proton channel, linked together by a central stalk and a peripheral stalk. During catalysis, ATP synthesis in the catalytic domain of F(1) is coupled via a rotary mechanism of the central stalk subunits to proton translocation. In terms of biological role, key component of the F(0) channel; it plays a direct role in translocation across the membrane. A homomeric c-ring of between 10-14 subunits forms the central stalk rotor element with the F(1) delta and epsilon subunits. The sequence is that of ATP synthase subunit c from Actinobacillus pleuropneumoniae serotype 7 (strain AP76).